Consider the following 421-residue polypeptide: Tyrosine--tRNA ligase 1 (421 aa).

Tyrosine 35 is an L-tyrosine binding site. The 'HIGH' region signature appears at 40–49; it reads PTADSLHIGH. L-tyrosine contacts are provided by tyrosine 170 and glutamine 174. Residues 231-235 carry the 'KMSKS' region motif; sequence KFGKT. ATP is bound at residue lysine 234. The S4 RNA-binding domain maps to 354–420; it reads LPLVEILVQS…GKKKYFLLTY (67 aa).

The protein belongs to the class-I aminoacyl-tRNA synthetase family. TyrS type 1 subfamily. Homodimer.

The protein resides in the cytoplasm. The catalysed reaction is tRNA(Tyr) + L-tyrosine + ATP = L-tyrosyl-tRNA(Tyr) + AMP + diphosphate + H(+). Functionally, catalyzes the attachment of tyrosine to tRNA(Tyr) in a two-step reaction: tyrosine is first activated by ATP to form Tyr-AMP and then transferred to the acceptor end of tRNA(Tyr). The sequence is that of Tyrosine--tRNA ligase 1 from Bacillus licheniformis (strain ATCC 14580 / DSM 13 / JCM 2505 / CCUG 7422 / NBRC 12200 / NCIMB 9375 / NCTC 10341 / NRRL NRS-1264 / Gibson 46).